The primary structure comprises 383 residues: MDALRLANTGLAVDIFKKLCEKSATDNFVFSPICISTSLALLHRGSQGNTASELQKVLHFEKVKDSDFGFQLLSSDISKVISIYSLKLLKRVYVDNSIECKKDFINSTKKPYPLELETIDIKSRPEEARCQINSSVKELTDGNFEAVLNEGSCDEKTKIIMLGAASFKGNWVYKFNESETKEMDFHINKKETKPVQMMHLEARLSIGYINELKTMVLELPFTSKHLSILILLPKDIEDDSTGLKKLEQDMTFEKYAQWTNPSMMANSKVKVYLPKFKLESSFDLKDMLKSLGINDAFNEEASDFSGMTESKDTSISQAIHKACIEVNEDGTEAPDVTMERRLMNKEEFCADRPFIFILRHNKTRTIIMFGRYCGPCEASSTAD.

Residues Asn106, Asn133, Asn176, and Asn361 are each glycosylated (N-linked (GlcNAc...) asparagine).

The protein belongs to the serpin family. Ov-serpin subfamily.

Its subcellular location is the secreted. It is found in the extracellular space. May not exhibit serine protease inhibitory activity. The chain is Serpin B5 (serpinb5) from Xenopus laevis (African clawed frog).